Reading from the N-terminus, the 299-residue chain is MWFKNLKIYRLSAPWALNGDQLEECLARFAYQGGNNLEMQSLGWISPRENGLLAHTLNGQILLTLRAEKKLLPTTVVNQVAKARAQEIEEQQGYKPGRKQMKEIKERVTDELLPKAFSIYRDTRVWIDTVNHWLVIDAAASAKADEVIGLLAKTIDPLPLDNLYVEQSPAAAMTGWLAADEAPANFSIDQDTELRASGESRAAIRYVKHSIDVDDVRRHIQSGKQCTRLAMTWADRVSFVLTESLDVKRVAPLDVLKENPDAATQNDDEKFDSDMTLMTGEVAKLLAELVDSLGGEKRV.

It belongs to the RdgC family.

It localises to the cytoplasm. The protein localises to the nucleoid. May be involved in recombination. The polypeptide is Recombination-associated protein RdgC (Bordetella parapertussis (strain 12822 / ATCC BAA-587 / NCTC 13253)).